The primary structure comprises 1094 residues: Protein phosphatase 2C and cyclic nucleotide-binding/kinase domain-containing protein (1094 aa).

Positions 107-397 constitute a PPM-type phosphatase domain; the sequence is RCSFLSQRGY…DDITIIVVHI (291 aa). Mn(2+) is bound by residues Asp148, Gly149, Asp344, and Asp388. Residues 491 to 616 and 617 to 758 contribute to the a nucleoside 3',5'-cyclic phosphate site; these read LFRK…RSVD and LLSR…RHSS. The Protein kinase domain maps to 785–1038; sequence TTCLSTTDCS…PESIKKHPWF (254 aa). Residues 791–799 and Lys811 contribute to the ATP site; that span reads TDCSEIGLV.

In the N-terminal section; belongs to the PP2C family. The protein in the C-terminal section; belongs to the protein kinase superfamily. AGC Ser/Thr protein kinase family. Requires Mg(2+) as cofactor. Mn(2+) is required as a cofactor.

It catalyses the reaction O-phospho-L-seryl-[protein] + H2O = L-seryl-[protein] + phosphate. The catalysed reaction is O-phospho-L-threonyl-[protein] + H2O = L-threonyl-[protein] + phosphate. This chain is Protein phosphatase 2C and cyclic nucleotide-binding/kinase domain-containing protein, found in Arabidopsis thaliana (Mouse-ear cress).